Reading from the N-terminus, the 359-residue chain is Fructose-bisphosphate aldolase, cytoplasmic isozyme (359 aa).

Residues Arg-52 and Lys-142 each coordinate substrate. Glu-184 functions as the Proton acceptor in the catalytic mechanism. Lys-226 serves as the catalytic Schiff-base intermediate with dihydroxyacetone-P.

This sequence belongs to the class I fructose-bisphosphate aldolase family.

Its subcellular location is the cytoplasm. The enzyme catalyses beta-D-fructose 1,6-bisphosphate = D-glyceraldehyde 3-phosphate + dihydroxyacetone phosphate. It functions in the pathway carbohydrate degradation; glycolysis; D-glyceraldehyde 3-phosphate and glycerone phosphate from D-glucose: step 4/4. The protein is Fructose-bisphosphate aldolase, cytoplasmic isozyme (ALDC) of Cicer arietinum (Chickpea).